The sequence spans 579 residues: Tetratricopeptide repeat protein 39C (579 aa).

Residues Q182 to T197 are compositionally biased toward polar residues. Residues Q182 to R202 are disordered. TPR repeat units lie at residues S311–Q344, H349–S382, and G481–R514.

Belongs to the TTC39 family.

The protein is Tetratricopeptide repeat protein 39C (ttc39c) of Danio rerio (Zebrafish).